The primary structure comprises 98 residues: NADH-ubiquinone oxidoreductase chain 4L (98 aa).

Helical transmembrane passes span 2–22 (PSIS…MLMF), 28–48 (SSLL…TLII), and 61–81 (IMLL…LVMV).

This sequence belongs to the complex I subunit 4L family. In terms of assembly, core subunit of respiratory chain NADH dehydrogenase (Complex I) which is composed of 45 different subunits.

It localises to the mitochondrion inner membrane. The catalysed reaction is a ubiquinone + NADH + 5 H(+)(in) = a ubiquinol + NAD(+) + 4 H(+)(out). Functionally, core subunit of the mitochondrial membrane respiratory chain NADH dehydrogenase (Complex I) which catalyzes electron transfer from NADH through the respiratory chain, using ubiquinone as an electron acceptor. Part of the enzyme membrane arm which is embedded in the lipid bilayer and involved in proton translocation. This Allocebus trichotis (Hairy-eared dwarf lemur) protein is NADH-ubiquinone oxidoreductase chain 4L (MT-ND4L).